Here is a 409-residue protein sequence, read N- to C-terminus: Pleckstrin homology domain-containing family O member 1 (409 aa).

Residues 1–20 (MMKKNNSTKRGPQDGNHQCA) form a disordered region. The PH domain maps to 21–132 (PPEKVGWVRK…WINALNSAIT (112 aa)). Residues 133 to 193 (RAKNRVLDEV…MLTLDLIQEE (61 aa)) form an interaction with capping proteins (CPs) region. The tract at residues 136–308 (NRVLDEVTVE…PHAPGQLSRI (173 aa)) is interaction with ATM, CKIP, IFP35 and NMI. Disordered regions lie at residues 218–304 (LAGS…APGQ), 325–350 (EVQG…ESEQ), and 390–409 (TPDS…KSLM). 2 positions are modified to phosphoserine: Ser227 and Ser271. A negative regulator of AP-1 activity region spans residues 308–409 (IQDLVARKLE…QHSQYRKSLM (102 aa)). Positions 331-340 (DGKRKAKEPP) are enriched in basic and acidic residues. Ser342 carries the post-translational modification Phosphoserine. The segment covering 390-402 (TPDSHLRQTTQHS) has biased composition (polar residues).

Heterodimer or homodimer. Interacts with CK2 and actin capping subunits (capping protein CP-alpha and CP-beta). CKIP1 and CK2 together inhibit the activity of actin capping protein at the barbed ends of actin filaments. Interacts with ATM, IFP35, JUN, JUND, NMI and PI3K. Interacts with AKT1, AKT2 and AKT3 (each isozyme of PKB), PtdIns(3,5)P2, PtdIns(4,5)P2 and PtdIns(3,4,5)P2. In terms of processing, C-terminal fragments could be released during apoptosis via caspase-3-dependent cleavage.

It is found in the membrane. Its subcellular location is the nucleus. The protein resides in the cytoplasm. Functionally, plays a role in the regulation of the actin cytoskeleton through its interactions with actin capping protein (CP). May function to target CK2 to the plasma membrane thereby serving as an adapter to facilitate the phosphorylation of CP by protein kinase 2 (CK2). Appears to target ATM to the plasma membrane. Also implicated in PI3K-regulated muscle differentiation, the regulation of AP-1 activity (plasma membrane bound AP-1 regulator that translocates to the nucleus) and the promotion of apoptosis induced by tumor necrosis factor TNF. When bound to PKB, it inhibits it probably by decreasing PKB level of phosphorylation. This chain is Pleckstrin homology domain-containing family O member 1 (PLEKHO1), found in Bos taurus (Bovine).